The sequence spans 192 residues: AYSWDNRVKYIVRYMYDIDNDGFLDKNDFECLAVRVTLIEGRGEFSPEGYAKNKEIMANLWNEIAELADFNKDGEVTVDEFKQAVQKNCKGKAFANFPNAFKVFIGNQFKTIDVDGDGMVGVDEYRLDCITRSAFADVKEIDDAYDKLCTEEDKKAGGINLARYQELYAQFISNEDEKNNACYLFGPLKEVQ.

Alanine 1 carries the N-acetylalanine modification. 4 EF-hand domains span residues 4-39 (WDNR…VTLI), 56-91 (IMAN…NCKG), 100-135 (AFKV…RSAF), and 136-171 (ADVK…YAQF). Ca(2+)-binding residues include aspartate 17, aspartate 19, aspartate 21, aspartate 28, aspartate 69, asparagine 71, aspartate 73, glutamate 75, glutamate 80, aspartate 113, aspartate 115, aspartate 117, methionine 119, and glutamate 124.

SCPs from crayfish, lobster, and shrimp are polymorphic dimers; three isotypes (alpha-alpha, alpha-beta, and beta-beta) have been identified.

Its function is as follows. Like parvalbumins, SCPs seem to be more abundant in fast contracting muscles, but no functional relationship can be established from this distribution. In Penaeus sp. (Penoeid shrimp), this protein is Sarcoplasmic calcium-binding protein, beta chain.